Consider the following 246-residue polypeptide: Probable phosphatase PBPRB2022 (246 aa).

Zn(2+) is bound by residues His8, His10, His16, His41, Glu74, His102, His132, Asp193, and His195.

This sequence belongs to the PHP family. It depends on Zn(2+) as a cofactor.

The protein is Probable phosphatase PBPRB2022 of Photobacterium profundum (strain SS9).